A 355-amino-acid chain; its full sequence is Protein RecA (355 aa).

Residue G72–T79 participates in ATP binding.

The protein belongs to the RecA family.

It is found in the cytoplasm. Functionally, can catalyze the hydrolysis of ATP in the presence of single-stranded DNA, the ATP-dependent uptake of single-stranded DNA by duplex DNA, and the ATP-dependent hybridization of homologous single-stranded DNAs. It interacts with LexA causing its activation and leading to its autocatalytic cleavage. This is Protein RecA from Wolbachia pipientis subsp. Culex pipiens (strain wPip).